Here is a 161-residue protein sequence, read N- to C-terminus: MATDVVFDTSMGSFTVELYNEHAPKTCRNFATLAQRGYYNNVIFHRIIPNFMVQTGDPTGTGRGGSSIYGEKFEDEIHPGLKHTGAGVLSMANSGPNTNGSQFFITLAPTPWLDGKHTIFGRVKSGMRVIQRMGLVKTNSEDRPVDEVKIIRAKVVEEGDE.

The 155-residue stretch at 1-155 (MATDVVFDTS…DEVKIIRAKV (155 aa)) folds into the PPIase cyclophilin-type domain.

Belongs to the cyclophilin-type PPIase family. PPIL1 subfamily.

The enzyme catalyses [protein]-peptidylproline (omega=180) = [protein]-peptidylproline (omega=0). Its function is as follows. PPIases accelerate the folding of proteins. It catalyzes the cis-trans isomerization of proline imidic peptide bonds in oligopeptides. This Aspergillus fumigatus (strain ATCC MYA-4609 / CBS 101355 / FGSC A1100 / Af293) (Neosartorya fumigata) protein is Peptidyl-prolyl cis-trans isomerase-like 1 (cyp1).